Consider the following 1340-residue polypeptide: Pleckstrin homology domain-containing family G member 2 (1340 aa).

Positions 34–44 (TPTAQAATTMA) are enriched in polar residues. Positions 34–76 (TPTAQAATTMASPRGSGSSTSLSTVGSEGDPSPACSASRPEPL) are disordered. Low complexity predominate over residues 45-62 (SPRGSGSSTSLSTVGSEG). The 182-residue stretch at 98-279 (RLERVAREIV…TAVAWYINDM (182 aa)) folds into the DH domain. In terms of domain architecture, PH spans 309 to 407 (ELVLEGTFRG…WIHCLQRLFF (99 aa)). 7 disordered regions span residues 431–623 (PKSK…IPCI), 684–743 (LPGP…SVQG), 820–855 (MQRA…EAEP), 907–979 (NVSD…PSAG), 991–1028 (TTSL…EQRD), 1047–1069 (PVCT…STDF), and 1125–1146 (PLSS…SLTD). At Thr-441 the chain carries Phosphothreonine. A phosphoserine mark is found at Ser-446 and Ser-465. The span at 560–572 (DIPKFPRDSRVPV) shows a compositional bias: basic and acidic residues. Over residues 588-600 (SEEEEEEDLETDE) the composition is skewed to acidic residues. Polar residues-rich tracts occupy residues 703 to 714 (SGSNPGRLSESP), 820 to 831 (MQRAETRASTNA), 907 to 921 (NVSD…SSNS), 930 to 945 (GQSN…TSLL), and 956 to 972 (PTAS…SQVP). Residues 1049–1059 (CTSSPDQQIPA) show a composition bias toward polar residues. Residue Thr-1215 is modified to Phosphothreonine. Phosphoserine is present on residues Ser-1219 and Ser-1269. The disordered stretch occupies residues 1250–1340 (RRQGPGGEGT…VGPSQGPGGS (91 aa)). A compositionally biased stretch (pro residues) spans 1276 to 1288 (PSPPPQPQPPAPP). Residues 1319-1333 (HPALLAAPHPGAVGP) show a composition bias toward low complexity.

Expressed in thymus, skeletal muscle, lung, testis, uterus, pancreas and heart and also expressed during embryogenesis.

May be a transforming oncogene with exchange activity for CDC42. May be a guanine-nucleotide exchange factor (GEF) for RAC1 and CDC42. Activated by the binding to subunits beta and gamma of the heterotrimeric guanine nucleotide-binding protein (G protein). Involved in the regulation of actin polymerization. The protein is Pleckstrin homology domain-containing family G member 2 (Plekhg2) of Mus musculus (Mouse).